A 531-amino-acid polypeptide reads, in one-letter code: MTAPRQSTSATPDVAAAHDKILIVDFGSQVTQLIARRVREEGVYSEIVPFQKAEQAFTAMQPKAVILSGGPASVLEAGAPSAPMSIFTAGVPVLGICYGEQTMAQQLGGMVEGGHHREFGRAAIEITDDCALFEGVWKKGEQHDVWMSHGDRVTKLPEGFRGVARAAGSPIAIIADDTRKFYAMQFHPEVVHTPDGAKLIRNFVRKVAGLKGDWTMRAFREEAIEKIRAQVGQGRVICGLSGGVDSAVAAVLIHEAIGDQLTCVFVDHGLLRMAEAETVVSLFRDHYNIPLVHVDASKTFLGELAGVTDPELKRKTIGRLFIDVFDEEAKKIGGADFLAQGTLYPDVIESVSFTGGPSVTIKSHHNVGGLPARMKMKLVEPLRELFKDEVRALGRELGLPDVFVGRHPFPGPGLAIRCPGEITPEKLDILRQADAIYIEEIRRAGLYDTIWQAFAVLLPVKTVGVMGDGRTYEFVVGLRAVTSTDGMTADFYPFDMRFLGETATRIINEVKGVNRVVYDVTSKPPGTIEWE.

One can recognise a Glutamine amidotransferase type-1 domain in the interval 20–213 (KILIVDFGSQ…VRKVAGLKGD (194 aa)). The Nucleophile role is filled by Cys97. Residues His187 and Glu189 contribute to the active site. The GMPS ATP-PPase domain maps to 214–406 (WTMRAFREEA…LGLPDVFVGR (193 aa)). An ATP-binding site is contributed by 241-247 (SGGVDSA).

In terms of assembly, homodimer.

The enzyme catalyses XMP + L-glutamine + ATP + H2O = GMP + L-glutamate + AMP + diphosphate + 2 H(+). It functions in the pathway purine metabolism; GMP biosynthesis; GMP from XMP (L-Gln route): step 1/1. In terms of biological role, catalyzes the synthesis of GMP from XMP. The protein is GMP synthase [glutamine-hydrolyzing] of Afipia carboxidovorans (strain ATCC 49405 / DSM 1227 / KCTC 32145 / OM5) (Oligotropha carboxidovorans).